We begin with the raw amino-acid sequence, 541 residues long: Chlorophyllide a oxygenase, chloroplastic (541 aa).

A coiled-coil region spans residues 114 to 151 (LAREFKSIGTLRKELAELQEELAKAHNQVHLSETRVSS). The span at 178–192 (AECTSLAPSTSSASR) shows a compositional bias: polar residues. Residues 178–208 (AECTSLAPSTSSASRVVNKKPPRRSLNVSGP) form a disordered region. The Rieske domain maps to 220–320 (WYPVAFSSDL…CFEQEGMVWI (101 aa)). Cysteine 261, histidine 263, cysteine 280, and histidine 283 together coordinate [2Fe-2S] cluster. Positions 359, 363, 366, and 371 each coordinate Fe cation.

As to expression, expressed in leaves and germinating seedlings, but not in sheaths and roots.

Its subcellular location is the plastid. It localises to the chloroplast membrane. The protein localises to the chloroplast thylakoid membrane. It carries out the reaction chlorophyllide a + 2 NADPH + 2 O2 + 2 H(+) = chlorophyllide b + 2 NADP(+) + 3 H2O. Functionally, catalyzes a two-step oxygenase reaction involved in the synthesis of chlorophyll b. Acts specifically on the non-esterified chlorophyllide a and not on chlorophyll a. The chain is Chlorophyllide a oxygenase, chloroplastic (CAO) from Oryza sativa subsp. japonica (Rice).